The primary structure comprises 117 residues: Large ribosomal subunit protein bL19 (117 aa).

This sequence belongs to the bacterial ribosomal protein bL19 family.

Its function is as follows. This protein is located at the 30S-50S ribosomal subunit interface and may play a role in the structure and function of the aminoacyl-tRNA binding site. In Shewanella pealeana (strain ATCC 700345 / ANG-SQ1), this protein is Large ribosomal subunit protein bL19.